The chain runs to 4563 residues: Apolipoprotein B-100 (4563 aa).

Residues 1 to 27 (MDPPRPALLALLALPALLLLLLAGARA) form the signal peptide. The tract at residues 32-126 (LENVSLVCPK…KNSEEFAAAM (95 aa)) is heparin-binding. Asn-34 is a glycosylation site (N-linked (GlcNAc...) asparagine). 2 cysteine pairs are disulfide-bonded: Cys-39-Cys-88 and Cys-78-Cys-97. The Vitellogenin domain occupies 46–672 (FKHLRKYTYN…PNNYLPKESM (627 aa)). Asn-185 carries an N-linked (GlcNAc...) asparagine glycan. Cystine bridges form between Cys-186–Cys-212, Cys-245–Cys-261, Cys-385–Cys-390, and Cys-478–Cys-513. The interval 232–306 (TRPLSTLISS…RFFGEGTKKM (75 aa)) is heparin-binding. The segment at 902–959 (NTNFFHESGLEAHVALKAGKLKFIIPSPKRPVKLLSGGNTLHLVSTTKTEVIPPLIEN) is heparin-binding. A disulfide bridge connects residues Cys-966 and Cys-976. An N-linked (GlcNAc...) asparagine glycan is attached at Asn-983. Cys-1112 carries the S-palmitoyl cysteine lipid modification. N-linked (GlcNAc...) asparagine glycans are attached at residues Asn-1368, Asn-1377, and Asn-1523. N6-acetyllysine is present on Lys-2004. The heparin-binding stretch occupies residues 2043 to 2178 (RDAVEKPQEF…EKLSQLQTYM (136 aa)). 5 N-linked (GlcNAc...) asparagine glycosylation sites follow: Asn-2239, Asn-2560, Asn-2779, Asn-2982, and Asn-3101. The heparin-binding stretch occupies residues 3161–3236 (FLKTTKQSFD…KIKFDKYKAE (76 aa)). Residues 3174 to 3184 (KAQYKKNKHRH) are basic (possible receptor binding region). An intrachain disulfide couples Cys-3194 to Cys-3324. Asn-3224 carries N-linked (GlcNAc...) asparagine glycosylation. Ser-3279 is modified (phosphoserine). Asn-3336 and Asn-3358 each carry an N-linked (GlcNAc...) asparagine glycan. Residues 3373–3393 (VIDALQYKLEGTTRLTRKRGL) form an LDL receptor binding region. Residues 3383-3516 (GTTRLTRKRG…REYSGTIASE (134 aa)) form a heparin-binding region. A basic (possible receptor binding region) region spans residues 3386–3394 (RLTRKRGLK). N-linked (GlcNAc...) asparagine glycans are attached at residues Asn-3411, Asn-3465, and Asn-3895. Ser-4048 is subject to Phosphoserine; by FAM20C. A Phosphothreonine modification is found at Thr-4052. N-linked (GlcNAc...) asparagine glycans are attached at residues Asn-4237 and Asn-4431.

In terms of assembly, interacts with PCSK9. Interacts with MTTP. Interacts with AUP1. Interacts with CIDEB. In terms of processing, palmitoylated; structural requirement for proper assembly of the hydrophobic core of the lipoprotein particle.

It is found in the cytoplasm. It localises to the secreted. The protein resides in the lipid droplet. Apolipoprotein B is a major protein constituent of chylomicrons (apo B-48), LDL (apo B-100) and VLDL (apo B-100). Apo B-100 functions as a recognition signal for the cellular binding and internalization of LDL particles by the apoB/E receptor. This Homo sapiens (Human) protein is Apolipoprotein B-100 (APOB).